Reading from the N-terminus, the 373-residue chain is Probable jasmonic acid carboxyl methyltransferase 2 (373 aa).

Residue Tyr18 coordinates S-adenosyl-L-homocysteine. Residue Gln25 participates in jasmonate binding. The S-adenosyl-L-homocysteine site is built by Cys59, Asn64, Asp96, Leu97, Ser135, and Phe136. 2 residues coordinate jasmonate: His156 and Trp157. Mg(2+) is bound by residues Asn174, Asp260, Phe262, and Asn263.

It belongs to the methyltransferase superfamily. Type-7 methyltransferase family. Mg(2+) is required as a cofactor.

The protein resides in the cytoplasm. The protein localises to the nucleus. The catalysed reaction is jasmonate + S-adenosyl-L-methionine = methyl (-)-jasmonate + S-adenosyl-L-homocysteine. It functions in the pathway lipid metabolism; oxylipin biosynthesis. Its function is as follows. Catalyzes the methylation of jasmonate into methyljasmonate, a plant volatile that acts as an important cellular regulator mediating diverse developmental processes and defense responses. This is Probable jasmonic acid carboxyl methyltransferase 2 from Theobroma cacao (Cacao).